The primary structure comprises 219 residues: MSGLSGPPTRRGPFPLALLLLFLLGPSLVLAISFHLPINSRKCLREEIHKDLLVTGAYEISDQSGGAGGLRSHLKITDSAGHILYSKEDATKGKFAFTTEDYDMFEVCFESKGTGRIPDQLVILDMKHGVEAKNYEEIAKVEKLKPLEVELRRLEDLSESIVNDFAYMEKREEEMRDTNESTNTRVLYFSIFSMFCLIGLATWQVFYLRRFFKAKKLIE.

Positions 1-31 (MSGLSGPPTRRGPFPLALLLLFLLGPSLVLA) are cleaved as a signal peptide. The segment at 1–142 (MSGLSGPPTR…KNYEEIAKVE (142 aa)) is required for interaction with STX17. Topologically, residues 32–185 (ISFHLPINSR…RDTNESTNTR (154 aa)) are lumenal. The region spanning 41–193 (RKCLREEIHK…TRVLYFSIFS (153 aa)) is the GOLD domain. Arg-171 and Arg-176 each carry dimethylated arginine. Asn-179 is a glycosylation site (N-linked (GlcNAc...) asparagine). Residues 186–206 (VLYFSIFSMFCLIGLATWQVF) form a helical membrane-spanning segment. The tract at residues 204 to 219 (QVFYLRRFFKAKKLIE) is interaction with COPG1. The Cytoplasmic segment spans residues 207 to 219 (YLRRFFKAKKLIE). The interval 207 to 219 (YLRRFFKAKKLIE) is interaction with ARF1 and IL1B. The short motif at 211–212 (FF) is the COPII vesicle coat-binding element. The short motif at 211 to 219 (FFKAKKLIE) is the COPI vesicle coat-binding element.

The protein belongs to the EMP24/GP25L family. Predominantly dimeric and to a lesser extent monomeric in the ER. Monomer and dimer in ERGIC and cis-Golgi network. Forms homooligomer (via GOLD domain); the assembly is promoted by direct binding with leaderless cargos and may form a protein channel that facilitates cargo entry into the ERGIC. Forms heterooligomeric complexes with other members of the p24 family such as TMED2, TMED7 and TMED9. Interacts (via GOLD domain) with TMED2 (via GOLD domain); the complex is required for export of TMED10 from the ER to the cis-Golgi network; the complex is proposed to be involved in cis-Golgi network dynamics and / or biogenesis. Associates with the COPI vesicle coat subunits (coatomer). Tetramerization of the cytoplasmic domain at the Golgi membrane in vitro; the complex is proposed to interact with COPI coatomer and induce budding of the vesicles. Interacts with COPG1; the interaction involves TMED10 homodimer. Interacts with ARF1 (GDP-bound); the interaction probably involves a TMED10 oligomer. Interacts with SEC23A, SEC24B, SEC24C and SEC24D components of the coat protein complex II/COPII, indicative of an association of TMED10 with the COPII vesicle coat. Interacts with CD59. Interacts with MPPE1/PGAP5; the complex might recruit and sort GPI-anchored proteins to the ER-exit site, or the interaction might lead to recycling of PGAP5 between the ER and the Golgi. Interacts with F2LR1/PAR2. Interacts with KDELR2/ERD2; the interaction is disrupted by KDELR2 ligand. Found in a complex composed at least of SURF4, TMED2 and TMED10. Associates with the presenilin-dependent gamma-secretase complex. Interacts with STX17; the interaction is direct. Interacts with IL-1; the interaction is direct. Interacts with RAB21 (active GTP-bound form); the interaction is indirect and regulates TMED10 abundance and localization at the Golgi.

It localises to the endoplasmic reticulum membrane. It is found in the endoplasmic reticulum-Golgi intermediate compartment membrane. Its subcellular location is the golgi apparatus membrane. The protein resides in the golgi apparatus. The protein localises to the cis-Golgi network membrane. It localises to the trans-Golgi network membrane. It is found in the cytoplasmic vesicle. Its subcellular location is the secretory vesicle membrane. The protein resides in the cell membrane. The protein localises to the melanosome. Its function is as follows. Cargo receptor involved in protein vesicular trafficking and quality control in the endoplasmic reticulum (ER) and Golgi. The p24 protein family is a group of transmembrane proteins that bind coat protein complex I/COPI and coat protein complex II/COPII involved in vesicular trafficking between the membranes. Acts at the lumenal side for incorporation of secretory cargo molecules into transport vesicles and involved in vesicle coat formation at the cytoplasmic side. Mainly functions in the early secretory pathway and cycles between the ER, ER-Golgi intermediate compartment (ERGIC) and Golgi, mediating cargo transport through COPI and COPII-coated vesicles. In COPII vesicle-mediated anterograde transport, involved in the transport of GPI-anchored proteins by acting together with TMED2 as their cargo receptor; the function specifically implies SEC24C and SEC24D of the COPII vesicle coat and lipid raft-like microdomains of the ER. Recognizes GPI anchors structural remodeled in the ER by the GPI inositol-deacylase/PGAP1 and the metallophosphoesterase MPPE1/PGAP5. In COPI vesicle-mediated retrograde transport, involved in the biogenesis of COPI vesicles and vesicle coat recruitment. Involved in trafficking of amyloid beta A4 protein and soluble APP-beta release (independent from the modulation of gamma-secretase activity). Involved in the KDELR2-mediated retrograde transport of the toxin A subunit (CTX-A-K63)together with COPI and the COOH terminus of KDELR2. On Golgi membranes, acts as a primary receptor for ARF1-GDP, a GTP-binding protein involved in COPI-vesicle formation. Increases coatomer-dependent GTPase-activating activity of ARFGAP2 which mediates the hydrolysis of ARF1-bound GTP and therefore modulates protein trafficking from the Golgi apparatus. Involved in the exocytic trafficking of G protein-coupled receptors F2LR1/PAR2 (trypsin and tryspin-like enzyme receptor), OPRM1 (opioid receptor) and P2RY4 (UTD and UDP receptor) from the Golgi to the plasma membrane, thus contributing to receptor resensitization. In addition to its cargo receptor activity, may also act as a protein channel after oligomerization, facilitating the post-translational entry of leaderless cytoplasmic cargo into the ERGIC. Involved in the translocation into ERGIC, the vesicle entry and the secretion of leaderless cargos (lacking the secretion signal sequence), including the mature form of interleukin 1/IL-1 family members, the alpha-crystallin B chain HSPB5, the carbohydrate-binding proteins galectin-1/LGALS1 and galectin-3/LGALS3, the microtubule-associated protein Tau/MAPT, and the annexin A1/ANXA1; the translocation process is dependent on cargo protein unfolding and enhanced by chaperones HSP90AB1 and HSP90B1/GRP9. Could also associates with the presenilin-dependent gamma-secretase complex in order to regulate gamma-cleavages of the amyloid beta A4 protein to yield amyloid-beta 40/Abeta40. The polypeptide is Transmembrane emp24 domain-containing protein 10 (TMED10) (Pongo abelii (Sumatran orangutan)).